Consider the following 289-residue polypeptide: Coiled-coil domain-containing protein 137 (289 aa).

Disordered stretches follow at residues 1-64 (MAGA…QEIP), 149-184 (EVQA…EKAA), and 204-225 (QPPE…GRRS). Over residues 7 to 20 (GAAVSRVQAGPGSP) the composition is skewed to low complexity. Ser19 is modified (phosphoserine). A coiled-coil region spans residues 155–197 (KEKSEQKKAKKAFQKRRLDKVRRKKEEKAADRLEQELLRDTVK). Basic residues predominate over residues 162–177 (KAKKAFQKRRLDKVRR). Ser233 bears the Phosphoserine mark. A coiled-coil region spans residues 247 to 273 (RQRIVEEERERAVQAYRALKQRQQQLH). The interval 265–289 (LKQRQQQLHGERPHLTSRKKPEPQL) is disordered. A compositionally biased stretch (basic and acidic residues) spans 273–289 (HGERPHLTSRKKPEPQL).

The protein localises to the chromosome. The polypeptide is Coiled-coil domain-containing protein 137 (CCDC137) (Homo sapiens (Human)).